Consider the following 191-residue polypeptide: GDP-mannose pyrophosphatase (191 aa).

GDP-alpha-D-mannose contacts are provided by residues tyrosine 17, 38–40 (KRE), arginine 67, and 85–87 (AGL). The Nudix hydrolase domain maps to 43–180 (DRGNGATILL…EIRDGKTVLL (138 aa)). Alanine 85, glutamate 100, and glutamate 104 together coordinate Mg(2+). Positions 86–106 (GLLDNDEPEVCIRKEAIEETG) match the Nudix box motif. Residues glutamate 104, glutamate 127, 150–151 (DE), and lysine 176 each bind GDP-alpha-D-mannose. Residue glutamate 151 participates in Mg(2+) binding.

The protein belongs to the Nudix hydrolase family. NudK subfamily. Homodimer. It depends on Mg(2+) as a cofactor.

It carries out the reaction GDP-alpha-D-mannose + H2O = alpha-D-mannose 1-phosphate + GMP + 2 H(+). Its function is as follows. Nucleoside diphosphate sugar hydrolase that hydrolyzes GDP-mannose as its preferred substrate, yielding GMP and mannose-1-phosphate. The chain is GDP-mannose pyrophosphatase (nudK) from Shigella flexneri serotype 5b (strain 8401).